Consider the following 89-residue polypeptide: Small ribosomal subunit protein uS14A (89 aa).

The protein belongs to the universal ribosomal protein uS14 family. In terms of assembly, part of the 30S ribosomal subunit. Contacts proteins S3 and S10.

Binds 16S rRNA, required for the assembly of 30S particles and may also be responsible for determining the conformation of the 16S rRNA at the A site. The sequence is that of Small ribosomal subunit protein uS14A from Listeria monocytogenes serotype 4b (strain F2365).